The primary structure comprises 284 residues: UPF0354 protein SERP1303 (284 aa).

This sequence belongs to the UPF0354 family.

In Staphylococcus epidermidis (strain ATCC 35984 / DSM 28319 / BCRC 17069 / CCUG 31568 / BM 3577 / RP62A), this protein is UPF0354 protein SERP1303.